The chain runs to 664 residues: MNINHKGVLKLTKMEKKFLRKQSKARHVLLKHEGIQAVSYPTQSLVIANGGLGNGVSRKQLLLTLEKCGPVEALLMPPNKPYAFVIFQTIEESKKAYFTLNGKEIIDDLGQKIFLYLNFVEKAQWKNMGLEALPPGLLVVEEIISSEEEKKLLESVNWTEDTGNQNFQRSLKHRRVKHFGYEFHYESNTVDKDKPLPGGLPEVCSSILEKLLKEGYIKHKPDQLTINQYEPGHGIPAHIDTHSAFEDEIISLSLGSAIVMDFKHPEGVTVQVMLPRRSLLVMTGESRYLWTHGITPRKFDTVQASEQFKGGIITSDIGDLTLSKRGMRTSFTFRKVRRMPCNCSYSSVCDRQRKATPPSLTESSKEALELEQKHVHQVYNEIASHFSSTRHSPWPRIVEFLKALPSGSIVADIGCGNGKYLGINKDLYMIGCDRSQNLVDICRERQFQALVCDALAVPVRSGSCDACISIAVIHHFATAERRVEALQELARLLRPGGQALIYVWAMEQEYKNQKSKYLRGKRISQGDKDELNSATSTEEFLVNQTPEGVNEDPALSVNSSSITKEEEYKSRKVPNSELPIHINRTCFHSQDVLVPWHLKRNPGKDKAIEPSGVAGCPDPSPVFHRYYHVFCDGELEASCQAVGDVSILQSYYDQGNWCVVLQKV.

Residues 45–120 (LVIANGGLGN…QKIFLYLNFV (76 aa)) enclose the RRM domain. Positions 220–337 (KPDQLTINQY…RTSFTFRKVR (118 aa)) constitute a Fe2OG dioxygenase domain. 227–229 (NQY) lines the 2-oxoglutarate pocket. Residues histidine 238 and aspartate 240 each contribute to the Fe cation site. Residue histidine 242 coordinates Zn(2+). Histidine 292 provides a ligand contact to Fe cation. 2-oxoglutarate-binding residues include arginine 328 and arginine 334. Residues cysteine 341, cysteine 343, and cysteine 349 each contribute to the Zn(2+) site. The tract at residues 411–664 (ADIGCGNGKY…GNWCVVLQKV (254 aa)) is methyltransferase domain.

Belongs to the alkB family. In terms of assembly, interacts with TRMT112. Fe(2+) serves as cofactor.

The protein localises to the cytoplasm. The protein resides in the nucleus. The enzyme catalyses 5-(carboxymethyl)uridine(34) in tRNA + S-adenosyl-L-methionine = 5-(2-methoxy-2-oxoethyl)uridine(34) in tRNA + S-adenosyl-L-homocysteine. Its function is as follows. Catalyzes the methylation of 5-carboxymethyl uridine to 5-methylcarboxymethyl uridine at the wobble position of the anticodon loop in tRNA via its methyltransferase domain. Catalyzes the last step in the formation of 5-methylcarboxymethyl uridine at the wobble position of the anticodon loop in target tRNA. Has a preference for tRNA(Arg) and tRNA(Glu), and does not bind tRNA(Lys). Binds tRNA and catalyzes the iron and alpha-ketoglutarate dependent hydroxylation of 5-methylcarboxymethyl uridine at the wobble position of the anticodon loop in tRNA via its dioxygenase domain, giving rise to 5-(S)-methoxycarbonylhydroxymethyluridine; has a preference for tRNA(Gly). Required for normal survival after DNA damage. May inhibit apoptosis and promote cell survival and angiogenesis. The chain is tRNA (carboxymethyluridine(34)-5-O)-methyltransferase ALKBH8 (Alkbh8) from Mus musculus (Mouse).